The chain runs to 198 residues: Ribonuclease HII (198 aa).

An RNase H type-2 domain is found at 6–195 (RRVAGVDEVG…VHHMLYQDKN (190 aa)). A divalent metal cation is bound by residues Asp12, Glu13, and Asp103.

Belongs to the RNase HII family. The cofactor is Mn(2+). Mg(2+) serves as cofactor.

It localises to the cytoplasm. The enzyme catalyses Endonucleolytic cleavage to 5'-phosphomonoester.. Functionally, endonuclease that specifically degrades the RNA of RNA-DNA hybrids. The polypeptide is Ribonuclease HII (Roseobacter denitrificans (strain ATCC 33942 / OCh 114) (Erythrobacter sp. (strain OCh 114))).